Reading from the N-terminus, the 72-residue chain is MGAKKNLLAELREKSSEELDEFIRDNKKALFTLRAEAALQNKAVKTHQFSLYKKSIARALTIKQEKKDRVHG.

Belongs to the universal ribosomal protein uL29 family.

The polypeptide is Large ribosomal subunit protein uL29 (rpmC) (Chlamydia muridarum (strain MoPn / Nigg)).